Reading from the N-terminus, the 100-residue chain is Large ribosomal subunit protein bL21 (100 aa).

This sequence belongs to the bacterial ribosomal protein bL21 family. As to quaternary structure, part of the 50S ribosomal subunit. Contacts protein L20.

This protein binds to 23S rRNA in the presence of protein L20. This Corynebacterium kroppenstedtii (strain DSM 44385 / JCM 11950 / CIP 105744 / CCUG 35717) protein is Large ribosomal subunit protein bL21.